The sequence spans 550 residues: Dihydroxy-acid dehydratase (550 aa).

A Mg(2+)-binding site is contributed by Asp78. Residue Cys119 coordinates [2Fe-2S] cluster. Mg(2+) contacts are provided by Asp120 and Lys121. An N6-carboxylysine modification is found at Lys121. Cys192 contributes to the [2Fe-2S] cluster binding site. Position 440 (Glu440) interacts with Mg(2+). The active-site Proton acceptor is Ser466.

It belongs to the IlvD/Edd family. Homodimer. The cofactor is [2Fe-2S] cluster. Requires Mg(2+) as cofactor.

It catalyses the reaction (2R)-2,3-dihydroxy-3-methylbutanoate = 3-methyl-2-oxobutanoate + H2O. It carries out the reaction (2R,3R)-2,3-dihydroxy-3-methylpentanoate = (S)-3-methyl-2-oxopentanoate + H2O. It participates in amino-acid biosynthesis; L-isoleucine biosynthesis; L-isoleucine from 2-oxobutanoate: step 3/4. Its pathway is amino-acid biosynthesis; L-valine biosynthesis; L-valine from pyruvate: step 3/4. In terms of biological role, functions in the biosynthesis of branched-chain amino acids. Catalyzes the dehydration of (2R,3R)-2,3-dihydroxy-3-methylpentanoate (2,3-dihydroxy-3-methylvalerate) into 2-oxo-3-methylpentanoate (2-oxo-3-methylvalerate) and of (2R)-2,3-dihydroxy-3-methylbutanoate (2,3-dihydroxyisovalerate) into 2-oxo-3-methylbutanoate (2-oxoisovalerate), the penultimate precursor to L-isoleucine and L-valine, respectively. This chain is Dihydroxy-acid dehydratase, found in Thermodesulfovibrio yellowstonii (strain ATCC 51303 / DSM 11347 / YP87).